The sequence spans 325 residues: MNALTAVQNNAVDSGQDYSGFTLIPSAQSPRLLELTFTEQTTNRFLEQVAEWPVQALEYKSFLRFRVGKILDDLCANQLQPLLLKTLLNRAEGALLINAVGIDDVAQADEMVKLATAVAHLIGRSNFDAMSGQYYARFVVKNVDNSDSYLRQPHRVMELHNDGTYVEEITDYVLMMKIDEQNMQGGNSLLLHLDDWEHLDHFFRHPLARRPMRFAAPPSKNVSKDVFHPVFDVDQQGRPVMRYIDQFVQPKDFEEGVWLSELSDAIETSKGILSVPVPVGKFLLINNLFWLHGRDRFTPHPDLRRELMRQRGYFAYATHHYQTHQ.

Fe cation-binding residues include histidine 160, aspartate 162, and histidine 292.

Belongs to the glutarate hydroxylase family. As to quaternary structure, homotetramer. Fe(2+) serves as cofactor.

The enzyme catalyses glutarate + 2-oxoglutarate + O2 = (S)-2-hydroxyglutarate + succinate + CO2. Its pathway is amino-acid degradation. Its function is as follows. Acts as an alpha-ketoglutarate-dependent dioxygenase catalyzing hydroxylation of glutarate (GA) to L-2-hydroxyglutarate (L2HG). Functions in a L-lysine degradation pathway that proceeds via cadaverine, glutarate and L-2-hydroxyglutarate. This Escherichia coli (strain UTI89 / UPEC) protein is Glutarate 2-hydroxylase.